A 468-amino-acid chain; its full sequence is Interferon-induced protein with tetratricopeptide repeats 2 (468 aa).

S2 is modified (N-acetylserine). 9 TPR repeats span residues 51 to 89 (ATMC…PDHV), 90 to 135 (EIRN…RIES), 136 to 171 (PELD…DPKN), 172 to 208 (PEFT…SPNS), 242 to 275 (TDVL…LPNN), 276 to 328 (AYVY…MIKD), 329 to 359 (SCSY…KELT), 360 to 398 (PGLK…RQKT), and 399 to 441 (KPKE…ESQQ). The interval 441–468 (QAAKVSERGQDSERPVFSPSLHEGGNEQ) is disordered. Residues 445–454 (VSERGQDSER) are compositionally biased toward basic and acidic residues.

The protein belongs to the IFIT family. As to quaternary structure, domain-swapped homodimer. Component of an interferon-dependent multiprotein complex, at least composed of IFIT1, IFIT2 and IFIT3. Interacts with IFIT1 and IFIT3. Interacts with STING1/MITA and disrupts its interaction with MAVS or TBK1. Interacts with EIF3E and EIF3C.

The protein localises to the cytoplasm. Its subcellular location is the endoplasmic reticulum. IFN-induced antiviral protein which inhibits expression of viral messenger RNAs lacking 2'-O-methylation of the 5' cap. The ribose 2'-O-methylation would provide a molecular signature to distinguish between self and non-self mRNAs by the host during viral infection. Viruses evolved several ways to evade this restriction system such as encoding their own 2'-O-methylase for their mRNAs or by stealing host cap containing the 2'-O-methylation (cap snatching mechanism). Binds AU-rich viral RNAs, with or without 5' triphosphorylation, RNA-binding is required for antiviral activity. Can promote apoptosis. This Cricetulus griseus (Chinese hamster) protein is Interferon-induced protein with tetratricopeptide repeats 2 (IFIT2).